The sequence spans 371 residues: tRNA-specific 2-thiouridylase MnmA (371 aa).

Residues 24–31 and Leu50 each bind ATP; that span reads AMSGGVDS. Cys119 acts as the Nucleophile in catalysis. An intrachain disulfide couples Cys119 to Cys215. Gly143 contributes to the ATP binding site. The tract at residues 165-167 is interaction with tRNA; it reads KDQ. Cys215 functions as the Cysteine persulfide intermediate in the catalytic mechanism.

It belongs to the MnmA/TRMU family.

The protein localises to the cytoplasm. The enzyme catalyses S-sulfanyl-L-cysteinyl-[protein] + uridine(34) in tRNA + AH2 + ATP = 2-thiouridine(34) in tRNA + L-cysteinyl-[protein] + A + AMP + diphosphate + H(+). Functionally, catalyzes the 2-thiolation of uridine at the wobble position (U34) of tRNA, leading to the formation of s(2)U34. In Neorickettsia sennetsu (strain ATCC VR-367 / Miyayama) (Ehrlichia sennetsu), this protein is tRNA-specific 2-thiouridylase MnmA.